Consider the following 129-residue polypeptide: Histone H2A-IV (129 aa).

Positions 1–22 are disordered; that stretch reads MSGRGKQGGKARAKAKSRSSRA. Ser-2 bears the N-acetylserine mark. Residue Ser-2 is modified to Phosphoserine. The residue at position 6 (Lys-6) is an N6-(2-hydroxyisobutyryl)lysine. N6-acetyllysine is present on residues Lys-6 and Lys-10. Basic residues predominate over residues 7 to 19; that stretch reads QGGKARAKAKSRS. The residue at position 10 (Lys-10) is an N6-(2-hydroxyisobutyryl)lysine; alternate. An N6-lactoyllysine; alternate modification is found at Lys-10. Lys-10 carries the post-translational modification N6-succinyllysine. Glycyl lysine isopeptide (Lys-Gly) (interchain with G-Cter in ubiquitin) cross-links involve residues Lys-14 and Lys-16. The residue at position 37 (Lys-37) is an N6-(2-hydroxyisobutyryl)lysine; alternate. Lys-75 and Lys-76 each carry N6-(2-hydroxyisobutyryl)lysine. Position 96 is an N6-(2-hydroxyisobutyryl)lysine; alternate (Lys-96). Position 96 is an N6-succinyllysine (Lys-96). Lys-96 is modified (N6-glutaryllysine; alternate). Lys-100 carries the N6-glutaryllysine modification. N5-methylglutamine is present on Gln-105. N6-(2-hydroxyisobutyryl)lysine; alternate is present on Lys-119. N6-glutaryllysine; alternate is present on residues Lys-119 and Lys-120. Lys-120 participates in a covalent cross-link: Glycyl lysine isopeptide (Lys-Gly) (interchain with G-Cter in ubiquitin).

Belongs to the histone H2A family. In terms of assembly, the nucleosome is a histone octamer containing two molecules each of H2A, H2B, H3 and H4 assembled in one H3-H4 heterotetramer and two H2A-H2B heterodimers. The octamer wraps approximately 147 bp of DNA. In terms of processing, monoubiquitination of Lys-120 (H2AK119Ub) gives a specific tag for epigenetic transcriptional repression. Following DNA double-strand breaks (DSBs), it is ubiquitinated through 'Lys-63' linkage of ubiquitin moieties, leading to the recruitment of repair proteins to sites of DNA damage. H2AK119Ub and ionizing radiation-induced 'Lys-63'-linked ubiquitination are distinct events. Post-translationally, phosphorylation on Ser-2 is enhanced during mitosis. Phosphorylation on Ser-2 directly represses transcription. Glutamine methylation at Gln-105 (H2AQ104me) by FBL is specifically dedicated to polymerase I. It is present at 35S ribosomal DNA locus and impairs binding of the FACT complex.

The protein resides in the nucleus. Its subcellular location is the chromosome. In terms of biological role, core component of nucleosome. Nucleosomes wrap and compact DNA into chromatin, limiting DNA accessibility to the cellular machineries which require DNA as a template. Histones thereby play a central role in transcription regulation, DNA repair, DNA replication and chromosomal stability. DNA accessibility is regulated via a complex set of post-translational modifications of histones, also called histone code, and nucleosome remodeling. The polypeptide is Histone H2A-IV (Gallus gallus (Chicken)).